A 236-amino-acid polypeptide reads, in one-letter code: MKIIPAIDLMDGQVVRLYKGDPKQKTVYSDDPVSVAKKWQKAGADMLHIVDLDATIGTGSNLDLIEKISKELSIPVEVAGGLRNEEIIDRAISFSNRVVIGTMAFKDKEMLQRIAKKYDFSKIVISVDHIDGFIVTHGWQESTKTPLLDAINEFVSMGFTEFLLTNVSKDGTLEGPDLEYLEKACAVQNANVIASGGISNIDDVSDVQRKNAFAVILGKALYENKISIEEAKQLVN.

Asp8 functions as the Proton acceptor in the catalytic mechanism. The active-site Proton donor is Asp128.

This sequence belongs to the HisA/HisF family.

The protein resides in the cytoplasm. The enzyme catalyses 1-(5-phospho-beta-D-ribosyl)-5-[(5-phospho-beta-D-ribosylamino)methylideneamino]imidazole-4-carboxamide = 5-[(5-phospho-1-deoxy-D-ribulos-1-ylimino)methylamino]-1-(5-phospho-beta-D-ribosyl)imidazole-4-carboxamide. Its pathway is amino-acid biosynthesis; L-histidine biosynthesis; L-histidine from 5-phospho-alpha-D-ribose 1-diphosphate: step 4/9. This chain is 1-(5-phosphoribosyl)-5-[(5-phosphoribosylamino)methylideneamino] imidazole-4-carboxamide isomerase, found in Nitrosopumilus maritimus (strain SCM1).